The sequence spans 280 residues: Para-Rep C2 (280 aa).

In terms of domain architecture, CRESS-DNA virus Rep endonuclease spans 1–97; that stretch reads MARRYCFTLN…ETLISEIGIP (97 aa). An RCR-1 motif is present at residues 6–9; the sequence is CFTL. A divalent metal cation is bound by residues E37 and H45. Positions 45 to 47 match the RCR-2 motif; sequence HLQ. Positions 54–75 match the Nuclear localization signal motif; sequence NKIRLGGLKKKFGNRAHWEIAR. The active-site For DNA cleavage activity is the Y84. The RCR-3 signature appears at 84–87; that stretch reads YCCK. Residues 97-103 carry the Nuclear localization signal motif; the sequence is PVMKGSN. 172-180 lines the ATP pocket; it reads GSDGGEGKT.

The protein belongs to the nanoviridea/circoviridae replication-associated protein family. Homooligomer (Potential). Rep binds to repeated DNA motifs (iterons). The cofactor is Mg(2+). It depends on Mn(2+) as a cofactor.

Its subcellular location is the host nucleus. The catalysed reaction is ATP + H2O = ADP + phosphate + H(+). Its function is as follows. Initiates and terminates the replication only of its own subviral DNA molecule. The closed circular ssDNA genome is first converted to a superhelical dsDNA. Rep binds a specific hairpin at the genome origin of replication. Introduces an endonucleolytic nick within the intergenic region of the genome, thereby initiating the rolling circle replication (RCR). Following cleavage, binds covalently to the 5'-phosphate of DNA as a tyrosyl ester. The cleavage gives rise to a free 3'-OH that serves as a primer for the cellular DNA polymerase. The polymerase synthesizes the (+) strand DNA by rolling circle mechanism. After one round of replication, a Rep-catalyzed nucleotidyl transfer reaction releases a circular single-stranded virus genome, thereby terminating the replication. Displays origin-specific DNA cleavage, nucleotidyl transferase, ATPase and helicase activities. This Subterranean clover stunt C2 alphasatellite (SCSC2A) protein is Para-Rep C2 (C2).